A 549-amino-acid polypeptide reads, in one-letter code: MQADFVIIGSGSAGSALAYRLSEGGKNSVIVIEAGGSDFGPFIQMPAALAWPMSMKRYNWGYLSEPEANLNNRRITAPRGKVIGGSSSINGMVYVRGHAEDFNRWEELGASGWAYADVLPYFKRMEHSHGGEEGWRGTDGPLHVQRGGFTNPLFQAFVEAGKQAGFETTEDYNGSKQEGFGLMEQTIFGGRRWSAANAYLKPALKRDNVKIVYGLAQRIVIEDGRATGVEIERNGRIEVVKANREVIVSASSFNSPKLLMLSGIGPGQHLQDMGIAVKADRPGVGANLQDHMEFYFQQVSTKPVSLYSWLPWFWQGVAGAQWLLSRGGLGASNQFEACAFLRSAPGLKQPDIQYHFLPVAISYDGKAAAKSHGFQVHVGYNLSKSRGSVSLRSADPKADPVLRFNYMSHAEDWEKFRHCVRLTREIFGQSAFHDYRGPEIQPGEGVQSDEEIDAFLREHLESAYHPCGTCRMGAKDDPMAVVDPQTRVIGIDGLRVADSSIFPHVTYGNLNGPSIMTGEKAADHILGKQPLARSNQEPWINPRAAVSDR.

An FAD-binding site is contributed by 4-33 (DFVIIGSGSAGSALAYRLSEGGKNSVIVIE). The active-site Proton acceptor is the His465.

This sequence belongs to the GMC oxidoreductase family. Requires FAD as cofactor.

The catalysed reaction is choline + A = betaine aldehyde + AH2. It carries out the reaction betaine aldehyde + NAD(+) + H2O = glycine betaine + NADH + 2 H(+). It functions in the pathway amine and polyamine biosynthesis; betaine biosynthesis via choline pathway; betaine aldehyde from choline (cytochrome c reductase route): step 1/1. In terms of biological role, involved in the biosynthesis of the osmoprotectant glycine betaine. Catalyzes the oxidation of choline to betaine aldehyde and betaine aldehyde to glycine betaine at the same rate. In Rhizobium johnstonii (strain DSM 114642 / LMG 32736 / 3841) (Rhizobium leguminosarum bv. viciae), this protein is Oxygen-dependent choline dehydrogenase.